Consider the following 634-residue polypeptide: Kelch-like protein 22 (634 aa).

Ala2 carries the N-acetylalanine modification. The region spanning 50–117 (FDVVLVVEGK…IYTSELELSL (68 aa)) is the BTB domain. Kelch repeat units lie at residues 299 to 349 (CVVG…VLNN), 350 to 399 (FVYL…VVGK), 400 to 446 (YIYA…TLQG), 448 to 493 (MYIT…ALLD), 495 to 544 (LFVI…VLDS), and 545 to 593 (RIYV…VLTL). Thr463 is subject to Phosphothreonine. A Phosphotyrosine modification is found at Tyr466. Position 475 is a phosphothreonine (Thr475). The disordered stretch occupies residues 600-634 (EQPRGTPNRSQADADFASEVMSVSDWEEFDNSSED). A Phosphothreonine modification is found at Thr605. Residues 624-634 (DWEEFDNSSED) are compositionally biased toward acidic residues.

In terms of assembly, component of the BCR(KLHL22) E3 ubiquitin ligase complex, at least composed of CUL3, KLHL22 and RBX1. Interacts with PLK1. Interacts with DEPDC5 (via DEP domain); the interaction depends on amino acid availability. Interacts with YWHAE; required for the nuclear localization of KLHL22 upon amino acid starvation.

It localises to the cytoplasm. The protein resides in the cytosol. It is found in the cytoskeleton. The protein localises to the microtubule organizing center. Its subcellular location is the centrosome. It localises to the spindle. The protein resides in the nucleus. It is found in the lysosome. It participates in protein modification; protein ubiquitination. Substrate-specific adapter of a BCR (BTB-CUL3-RBX1) E3 ubiquitin ligase complex required for chromosome alignment and localization of PLK1 at kinetochores. The BCR(KLHL22) ubiquitin ligase complex mediates monoubiquitination of PLK1, leading to PLK1 dissociation from phosphoreceptor proteins and subsequent removal from kinetochores, allowing silencing of the spindle assembly checkpoint (SAC) and chromosome segregation. Monoubiquitination of PLK1 does not lead to PLK1 degradation. The BCR(KLHL22) ubiquitin ligase complex is also responsible for the amino acid-stimulated 'Lys-48' polyubiquitination and proteasomal degradation of DEPDC5. Through the degradation of DEPDC5, releases the GATOR1 complex-mediated inhibition of the TORC1 pathway. It is therefore an amino acid-dependent activator within the amino acid-sensing branch of the TORC1 pathway, indirectly regulating different cellular processes including cell growth and autophagy. This Mus musculus (Mouse) protein is Kelch-like protein 22.